The primary structure comprises 338 residues: Large ribosomal subunit protein uL10 (338 aa).

A compositionally biased stretch (low complexity) spans 298–308 (AAQQTQTQQST). Positions 298–338 (AAQQTQTQQSTAEEKKEEKKEEEKKGPSEEEIGSGLASLFG) are disordered. Residues 309–325 (AEEKKEEKKEEEKKGPS) show a composition bias toward basic and acidic residues.

Belongs to the universal ribosomal protein uL10 family. In terms of assembly, part of the 50S ribosomal subunit. Forms part of the ribosomal stalk which helps the ribosome interact with GTP-bound translation factors. Forms a heptameric L10(L12)2(L12)2(L12)2 complex, where L10 forms an elongated spine to which the L12 dimers bind in a sequential fashion.

Functionally, forms part of the ribosomal stalk, playing a central role in the interaction of the ribosome with GTP-bound translation factors. This chain is Large ribosomal subunit protein uL10, found in Saccharolobus islandicus (strain M.16.27) (Sulfolobus islandicus).